Here is a 476-residue protein sequence, read N- to C-terminus: Protein DETOXIFICATION 4 (476 aa).

The next 12 membrane-spanning stretches (helical) occupy residues alanine 35–valine 55, glycine 66–valine 86, isoleucine 117–leucine 137, leucine 154–glutamine 174, leucine 176–tryptophan 196, glycine 208–valine 228, alanine 260–leucine 280, valine 289–alanine 309, leucine 332–phenylalanine 352, valine 370–leucine 390, valine 408–leucine 428, and leucine 433–alanine 453.

It belongs to the multi antimicrobial extrusion (MATE) (TC 2.A.66.1) family.

Its subcellular location is the membrane. The polypeptide is Protein DETOXIFICATION 4 (Arabidopsis thaliana (Mouse-ear cress)).